Here is a 403-residue protein sequence, read N- to C-terminus: FAD-dependent monooxygenase tazP (403 aa).

Residues Gly-75, Arg-144, Asp-354, and Ala-367 each coordinate FAD.

Belongs to the paxM FAD-dependent monooxygenase family. It depends on FAD as a cofactor.

The protein operates within secondary metabolite biosynthesis. Its function is as follows. FAD-dependent monooxygenase; part of the gene cluster that mediates the biosynthesis of azaterrilone A and other azaphilones, a class of fungal metabolites characterized by a highly oxygenated pyrano-quinone bicyclic core and exhibiting a broad range of bioactivities. The first step of the pathway begins with the non-reducing polyketide synthase tazA that assembles one acetyl-CoA starter unit, five malonyl-CoA units, and catalyzes a series of Claisen condensations, methylation, PT-mediated cyclization, and finally releases the first hexaketide precursor through the R-domain. The tazA product then undergoes reduction on its terminal ketone and the following pyran-ring formation by yet undetermined enzyme(s). Dehydration and enoyl reduction, possibly involving the trans-enoyl reductase tazE leads to the next intermediate. TazD is predicted as an acetyltransferase and might catalyze the acetylation steps leading to the synthesis of azaterrilone A. Azaterrilone A is not the final product of the taz pathway and both the highly reducing polyketide synthase tazB and the dual enzyme tazHJ catalyze late steps of the pathway, leading to the production of the 2 final stereoisomers that contain additional polyketide modification whose structures have still to be determined. The sequence is that of FAD-dependent monooxygenase tazP from Aspergillus terreus (strain NIH 2624 / FGSC A1156).